Consider the following 639-residue polypeptide: Splicing factor 1 (639 aa).

Disordered stretches follow at residues 1-42 (MATG…VIPP) and 65-94 (LRTGDLGIPPNPEDRSPSPEPIYNSEGKRL). Ala-2 carries the N-acetylalanine modification. Ser-14 carries the post-translational modification Phosphoserine. The Nuclear localization signal signature appears at 15 to 19 (KKRKR). Ser-20 carries the post-translational modification Phosphoserine; by PKG. Ser-80 and Ser-82 each carry phosphoserine. Tyr-87 carries the phosphotyrosine modification. Ser-89 bears the Phosphoserine mark. Residues 141 to 222 (MIPQDEYPEI…ENVKKAVEQI (82 aa)) form the KH domain. Residues 277–296 (TVCTKCGGAGHIASDCKFQR) form a CCHC-type zinc finger. Positions 325 to 639 (VPASVGSTSG…PAPPPPPPQN (315 aa)) are disordered. Positions 335–350 (PATTPLASAPRPAAPA) are enriched in low complexity. The span at 382–394 (MHGGGPGGPGGGP) shows a compositional bias: gly residues. Pro residues predominate over residues 418-447 (NGPPPPWMQPPPPPMNQGPHPPGHHGPPPM). Position 463 is a phosphoserine (Leu-463). Lys-467 bears the Omega-N-methylarginine mark. Residues 470 to 499 (MPPPPMGMMPPPPPPPSGQPPPPPSGPLPP) show a composition bias toward pro residues. Composition is skewed to low complexity over residues 515-534 (SSMASSTPLPWQQNTTTTTT) and 542-566 (PPWQQQQAAAAASPGAPQMQGNPTM). 2 stretches are compositionally biased toward pro residues: residues 567–591 (VPLPPGVQPPLPPGAPPPPPPPPPG) and 598–608 (APPPPPPPPMD). A compositionally biased stretch (low complexity) spans 615-625 (MMGMGVAGMPP). Over residues 626-639 (FGMPPAPPPPPPQN) the composition is skewed to pro residues.

Belongs to the BBP/SF1 family. Binds U2AF2. Interacts with U1 snRNA. Binds EWSR1, FUS and TAF15. Interacts with RBM17. Post-translationally, phosphorylation on Ser-20 interferes with U2AF2 binding and spliceosome assembly. Isoform 6 is phosphorylated on Ser-463. In terms of tissue distribution, detected in lung, ovary, adrenal gland, colon, kidney, muscle, pancreas, thyroid, placenta, brain, liver and heart.

It is found in the nucleus. Necessary for the ATP-dependent first step of spliceosome assembly. Binds to the intron branch point sequence (BPS) 5'-UACUAAC-3' of the pre-mRNA. May act as transcription repressor. In Homo sapiens (Human), this protein is Splicing factor 1 (SF1).